Reading from the N-terminus, the 476-residue chain is Aspartyl/glutamyl-tRNA(Asn/Gln) amidotransferase subunit B (476 aa).

This sequence belongs to the GatB/GatE family. GatB subfamily. As to quaternary structure, heterotrimer of A, B and C subunits.

The enzyme catalyses L-glutamyl-tRNA(Gln) + L-glutamine + ATP + H2O = L-glutaminyl-tRNA(Gln) + L-glutamate + ADP + phosphate + H(+). It catalyses the reaction L-aspartyl-tRNA(Asn) + L-glutamine + ATP + H2O = L-asparaginyl-tRNA(Asn) + L-glutamate + ADP + phosphate + 2 H(+). Allows the formation of correctly charged Asn-tRNA(Asn) or Gln-tRNA(Gln) through the transamidation of misacylated Asp-tRNA(Asn) or Glu-tRNA(Gln) in organisms which lack either or both of asparaginyl-tRNA or glutaminyl-tRNA synthetases. The reaction takes place in the presence of glutamine and ATP through an activated phospho-Asp-tRNA(Asn) or phospho-Glu-tRNA(Gln). This chain is Aspartyl/glutamyl-tRNA(Asn/Gln) amidotransferase subunit B, found in Listeria innocua serovar 6a (strain ATCC BAA-680 / CLIP 11262).